A 398-amino-acid chain; its full sequence is 4-hydroxy-3-methylbut-2-en-1-yl diphosphate synthase (ferredoxin) (398 aa).

[4Fe-4S] cluster-binding residues include Cys306, Cys309, Cys340, and Glu347.

The protein belongs to the IspG family. The cofactor is [4Fe-4S] cluster.

The enzyme catalyses (2E)-4-hydroxy-3-methylbut-2-enyl diphosphate + 2 oxidized [2Fe-2S]-[ferredoxin] + H2O = 2-C-methyl-D-erythritol 2,4-cyclic diphosphate + 2 reduced [2Fe-2S]-[ferredoxin] + H(+). Its pathway is isoprenoid biosynthesis; isopentenyl diphosphate biosynthesis via DXP pathway; isopentenyl diphosphate from 1-deoxy-D-xylulose 5-phosphate: step 5/6. Its function is as follows. Converts 2C-methyl-D-erythritol 2,4-cyclodiphosphate (ME-2,4cPP) into 1-hydroxy-2-methyl-2-(E)-butenyl 4-diphosphate. This chain is 4-hydroxy-3-methylbut-2-en-1-yl diphosphate synthase (ferredoxin), found in Synechococcus sp. (strain CC9605).